Reading from the N-terminus, the 509-residue chain is Kynureninase 1 (509 aa).

Pyridoxal 5'-phosphate-binding positions include Leu-169, Thr-170, 197-200 (FPSD), Asp-283, His-286, and Tyr-308. At Lys-309 the chain carries N6-(pyridoxal phosphate)lysine. Positions 349 and 377 each coordinate pyridoxal 5'-phosphate.

This sequence belongs to the kynureninase family. In terms of assembly, homodimer. It depends on pyridoxal 5'-phosphate as a cofactor.

It is found in the cytoplasm. It carries out the reaction L-kynurenine + H2O = anthranilate + L-alanine + H(+). It catalyses the reaction 3-hydroxy-L-kynurenine + H2O = 3-hydroxyanthranilate + L-alanine + H(+). It participates in amino-acid degradation; L-kynurenine degradation; L-alanine and anthranilate from L-kynurenine: step 1/1. The protein operates within cofactor biosynthesis; NAD(+) biosynthesis; quinolinate from L-kynurenine: step 2/3. Functionally, catalyzes the cleavage of L-kynurenine (L-Kyn) and L-3-hydroxykynurenine (L-3OHKyn) into anthranilic acid (AA) and 3-hydroxyanthranilic acid (3-OHAA), respectively. The chain is Kynureninase 1 (bna5-1) from Aspergillus fumigatus (strain CBS 144.89 / FGSC A1163 / CEA10) (Neosartorya fumigata).